Here is a 447-residue protein sequence, read N- to C-terminus: Probable glycine dehydrogenase (decarboxylating) subunit 1 (447 aa).

The protein belongs to the GcvP family. N-terminal subunit subfamily. As to quaternary structure, the glycine cleavage system is composed of four proteins: P, T, L and H. In this organism, the P 'protein' is a heterodimer of two subunits.

It carries out the reaction N(6)-[(R)-lipoyl]-L-lysyl-[glycine-cleavage complex H protein] + glycine + H(+) = N(6)-[(R)-S(8)-aminomethyldihydrolipoyl]-L-lysyl-[glycine-cleavage complex H protein] + CO2. The glycine cleavage system catalyzes the degradation of glycine. The P protein binds the alpha-amino group of glycine through its pyridoxal phosphate cofactor; CO(2) is released and the remaining methylamine moiety is then transferred to the lipoamide cofactor of the H protein. This Halalkalibacterium halodurans (strain ATCC BAA-125 / DSM 18197 / FERM 7344 / JCM 9153 / C-125) (Bacillus halodurans) protein is Probable glycine dehydrogenase (decarboxylating) subunit 1.